The chain runs to 154 residues: UPF0225 protein YPTB2098 (154 aa).

The protein belongs to the UPF0225 family.

This chain is UPF0225 protein YPTB2098, found in Yersinia pseudotuberculosis serotype I (strain IP32953).